The following is a 194-amino-acid chain: Fe/S biogenesis protein NfuA (194 aa).

Residues cysteine 152 and cysteine 155 each coordinate [4Fe-4S] cluster.

It belongs to the NfuA family. In terms of assembly, homodimer. [4Fe-4S] cluster is required as a cofactor.

Its function is as follows. Involved in iron-sulfur cluster biogenesis. Binds a 4Fe-4S cluster, can transfer this cluster to apoproteins, and thereby intervenes in the maturation of Fe/S proteins. Could also act as a scaffold/chaperone for damaged Fe/S proteins. This Pseudomonas putida (strain ATCC 700007 / DSM 6899 / JCM 31910 / BCRC 17059 / LMG 24140 / F1) protein is Fe/S biogenesis protein NfuA.